Reading from the N-terminus, the 393-residue chain is Acetylornithine aminotransferase 1 (393 aa).

Arginine 131 contributes to the N(2)-acetyl-L-ornithine binding site. 215–218 lines the pyridoxal 5'-phosphate pocket; the sequence is DEVQ. The residue at position 244 (lysine 244) is an N6-(pyridoxal phosphate)lysine. Threonine 272 lines the N(2)-acetyl-L-ornithine pocket. Threonine 273 is a binding site for pyridoxal 5'-phosphate.

It belongs to the class-III pyridoxal-phosphate-dependent aminotransferase family. ArgD subfamily. Homodimer. Pyridoxal 5'-phosphate is required as a cofactor.

Its subcellular location is the cytoplasm. The catalysed reaction is N(2)-acetyl-L-ornithine + 2-oxoglutarate = N-acetyl-L-glutamate 5-semialdehyde + L-glutamate. The protein operates within amino-acid biosynthesis; L-arginine biosynthesis; N(2)-acetyl-L-ornithine from L-glutamate: step 4/4. This Bordetella parapertussis (strain 12822 / ATCC BAA-587 / NCTC 13253) protein is Acetylornithine aminotransferase 1.